Reading from the N-terminus, the 263-residue chain is HTH-type transcriptional repressor NanR (263 aa).

The segment at 1–22 (MGLMNAFDSQTEDSSPAIGRNL) is disordered. In terms of domain architecture, HTH gntR-type spans 30 to 98 (KKLSEMVEEE…NGERARVSRP (69 aa)). A DNA-binding region (H-T-H motif) is located at residues 58–77 (ERELMAFFNVGRPSVREALA).

Belongs to the NanR family.

Its function is as follows. Transcriptional repressor that controls expression of the genes required for the catabolism of sialic acids. In Shigella boydii serotype 4 (strain Sb227), this protein is HTH-type transcriptional repressor NanR.